The primary structure comprises 188 residues: Elongation factor P (188 aa).

This sequence belongs to the elongation factor P family.

The protein resides in the cytoplasm. It participates in protein biosynthesis; polypeptide chain elongation. In terms of biological role, involved in peptide bond synthesis. Stimulates efficient translation and peptide-bond synthesis on native or reconstituted 70S ribosomes in vitro. Probably functions indirectly by altering the affinity of the ribosome for aminoacyl-tRNA, thus increasing their reactivity as acceptors for peptidyl transferase. The sequence is that of Elongation factor P from Ralstonia nicotianae (strain ATCC BAA-1114 / GMI1000) (Ralstonia solanacearum).